Consider the following 101-residue polypeptide: UPF0235 protein MmarC7_0309 (101 aa).

The protein belongs to the UPF0235 family.

This is UPF0235 protein MmarC7_0309 from Methanococcus maripaludis (strain C7 / ATCC BAA-1331).